The primary structure comprises 103 residues: Large ribosomal subunit protein bL21 (103 aa).

This sequence belongs to the bacterial ribosomal protein bL21 family. As to quaternary structure, part of the 50S ribosomal subunit. Contacts protein L20.

Its function is as follows. This protein binds to 23S rRNA in the presence of protein L20. In Heliobacterium modesticaldum (strain ATCC 51547 / Ice1), this protein is Large ribosomal subunit protein bL21.